Consider the following 159-residue polypeptide: Globin-like protein (159 aa).

The Globin domain maps to 1 to 152 (MSMNRQEISD…FNAESQTHLK (152 aa)). His-101 is a binding site for heme.

Belongs to the globin family. In terms of assembly, homodimer. In terms of tissue distribution, expressed mainly in a subset of neuronal cells and in head muscular tissue.

It is found in the cytoplasm. In terms of biological role, may be a globin and may play a role in oxygen transport. This is Globin-like protein (glb-1) from Caenorhabditis elegans.